Reading from the N-terminus, the 755-residue chain is Glucosylglycerol-phosphate synthase (755 aa).

This sequence belongs to the glycosyltransferase 20 family.

It catalyses the reaction ADP-alpha-D-glucose + sn-glycerol 3-phosphate = 2-O-(alpha-D-glucopyranosyl)-sn-glycerol 3-phosphate + ADP + H(+). It participates in glycan metabolism; glucosylglycerol biosynthesis. Functionally, involved in salt tolerance by producing GG-phosphate from ADP-glucose and glycerol-3-phosphate (G3P), an intermediate in the synthesis of the osmolyte glucosylglycerol (GG). This Pseudomonas anguilliseptica protein is Glucosylglycerol-phosphate synthase (ggpS).